A 112-amino-acid chain; its full sequence is Integration host factor subunit alpha (112 aa).

The protein belongs to the bacterial histone-like protein family. Heterodimer of an alpha and a beta chain.

This protein is one of the two subunits of integration host factor, a specific DNA-binding protein that functions in genetic recombination as well as in transcriptional and translational control. The chain is Integration host factor subunit alpha from Rhizobium etli (strain ATCC 51251 / DSM 11541 / JCM 21823 / NBRC 15573 / CFN 42).